Consider the following 510-residue polypeptide: MASTIARTEERQNAGTMELKDDTVIIVLGASGDLAKKKTFPALFGLYRNKFLPKGIKIVGYARTNMDHEEYLRRVRSYIKTPTKEIEEQLDSFCQFCTYISGQYDKDDSFINLNKHLEEIEKGQKEQNRIYYMALPPSVFTTVSDQLKRNCYPKNGVARIIVEKPFGKDLQSSRDLQKALEPNWKEEEIFRIDHYLGKEMVKNILIMRFGNEFFNATWNRHHIDNVQITFKEPFGTEGRGGYFDEFGIIRDVMQNHLLQVLTLLAMERPISFSAEDIRDEKVRVLRAMDAIEPKNVIIGQYGKSLDGSKPAYKEDETVPQDSRCPTFCAMVAYIKNERWDGVPFIMKAGKALNEQKTEIRIQFRDVTSGIFKDIPRNELVIRVQPNESVYIKMNSKLPGLSMQTVVTELDLTYRRRFSDLKIPEAYESLILDALKGDHSNFVRDDELDASWRIFTPLLHYLDDNKEIIPMEYPYGSRGPAVLDDFTASFGYKFSDAAGYQWPLTSTPNRL.

Residues 29-36, Arg63, and Lys164 each bind NADP(+); that span reads GASGDLAK. D-glucose 6-phosphate is bound by residues Lys164, 194–198, Glu232, and Asp251; that span reads HYLGK. His256 functions as the Proton acceptor in the catalytic mechanism. An NADP(+)-binding site is contributed by Lys347. Lys350 lines the D-glucose 6-phosphate pocket. NADP(+) is bound by residues Lys356, Arg360, and Arg382. Gln384 serves as a coordination point for D-glucose 6-phosphate. NADP(+) contacts are provided by residues 390–392, 410–412, and Arg477; these read YIK and DLT.

This sequence belongs to the glucose-6-phosphate dehydrogenase family.

The catalysed reaction is D-glucose 6-phosphate + NADP(+) = 6-phospho-D-glucono-1,5-lactone + NADPH + H(+). It functions in the pathway carbohydrate degradation; pentose phosphate pathway; D-ribulose 5-phosphate from D-glucose 6-phosphate (oxidative stage): step 1/3. In terms of biological role, catalyzes the rate-limiting step of the oxidative pentose-phosphate pathway, which represents a route for the dissimilation of carbohydrates besides glycolysis. The main function of this enzyme is to provide reducing power (NADPH) and pentose phosphates for fatty acid and nucleic acid synthesis. The sequence is that of Glucose-6-phosphate 1-dehydrogenase (gsdA) from Aspergillus niger.